We begin with the raw amino-acid sequence, 208 residues long: V-type ATP synthase subunit D (208 aa).

Belongs to the V-ATPase D subunit family.

Its function is as follows. Produces ATP from ADP in the presence of a proton gradient across the membrane. The chain is V-type ATP synthase subunit D from Streptococcus pyogenes serotype M49 (strain NZ131).